A 177-amino-acid chain; its full sequence is ATP synthase subunit delta (177 aa).

It belongs to the ATPase delta chain family. As to quaternary structure, F-type ATPases have 2 components, F(1) - the catalytic core - and F(0) - the membrane proton channel. F(1) has five subunits: alpha(3), beta(3), gamma(1), delta(1), epsilon(1). F(0) has three main subunits: a(1), b(2) and c(10-14). The alpha and beta chains form an alternating ring which encloses part of the gamma chain. F(1) is attached to F(0) by a central stalk formed by the gamma and epsilon chains, while a peripheral stalk is formed by the delta and b chains.

It is found in the cell inner membrane. F(1)F(0) ATP synthase produces ATP from ADP in the presence of a proton or sodium gradient. F-type ATPases consist of two structural domains, F(1) containing the extramembraneous catalytic core and F(0) containing the membrane proton channel, linked together by a central stalk and a peripheral stalk. During catalysis, ATP synthesis in the catalytic domain of F(1) is coupled via a rotary mechanism of the central stalk subunits to proton translocation. In terms of biological role, this protein is part of the stalk that links CF(0) to CF(1). It either transmits conformational changes from CF(0) to CF(1) or is implicated in proton conduction. The polypeptide is ATP synthase subunit delta (Aliivibrio salmonicida (strain LFI1238) (Vibrio salmonicida (strain LFI1238))).